A 280-amino-acid polypeptide reads, in one-letter code: Protoheme IX farnesyltransferase 2 (280 aa).

Helical transmembrane passes span 12 to 32, 35 to 55, 76 to 96, 98 to 118, 129 to 149, 158 to 178, 199 to 221, 226 to 248, and 255 to 275; these read VIWL…GGVD, LFSL…FNHY, LITP…GISL, FLLL…FYAV, WLNI…GYAL, AVLI…ALAF, ERAV…WLYL, GAGG…YAAV, and MWKM…ALMI.

It belongs to the UbiA prenyltransferase family. Protoheme IX farnesyltransferase subfamily.

It localises to the cell membrane. It catalyses the reaction heme b + (2E,6E)-farnesyl diphosphate + H2O = Fe(II)-heme o + diphosphate. The protein operates within porphyrin-containing compound metabolism; heme O biosynthesis; heme O from protoheme: step 1/1. Converts heme B (protoheme IX) to heme O by substitution of the vinyl group on carbon 2 of heme B porphyrin ring with a hydroxyethyl farnesyl side group. This is Protoheme IX farnesyltransferase 2 from Pyrobaculum aerophilum (strain ATCC 51768 / DSM 7523 / JCM 9630 / CIP 104966 / NBRC 100827 / IM2).